We begin with the raw amino-acid sequence, 194 residues long: Small ribosomal subunit protein eS7 (194 aa).

The protein belongs to the eukaryotic ribosomal protein eS7 family.

In Caenorhabditis elegans, this protein is Small ribosomal subunit protein eS7 (rps-7).